Reading from the N-terminus, the 364-residue chain is PHD finger protein 6 (364 aa).

At Ser-2 the chain carries N-acetylserine. Short sequence motifs (nuclear localization signal) lie at residues 13-16 (RQRK) and 129-133 (RKHKK). The C2HC pre-PHD-type 1 zinc-finger motif lies at 14–52 (QRKCGFCKSNRDKECGQLLISENQKVAAHHKCMLFSSAL). Residues 14 to 132 (QRKCGFCKSN…IYMVYCRKHK (119 aa)) are extended PHD1 domain (ePHD1). The segment at 80 to 132 (LMCSLCHCPGATIGCDVKTCHRTYHYHCALHDKAQIREKPSQGIYMVYCRKHK) adopts a PHD-type 1 zinc-finger fold. 3 positions are modified to phosphoserine: Ser-138, Ser-145, and Ser-155. The interval 139–211 (EADLEESFNE…RSSPNDTRPK (73 aa)) is disordered. The Nucleolar localization signal signature appears at 157–169 (KTKKKSRKGRPRK). Positions 157 to 171 (KTKKKSRKGRPRKTN) are enriched in basic residues. Lys-173 participates in a covalent cross-link: Glycyl lysine isopeptide (Lys-Gly) (interchain with G-Cter in SUMO2). Phosphoserine is present on residues Ser-183 and Ser-199. A C2HC pre-PHD-type 2 zinc finger spans residues 209 to 249 (RPKCGFCHVGEEENEARGKLHIFNAKKAAAHYKCMLFSSGT). An extended PHD2 domain (ePHD2) region spans residues 209 to 330 (RPKCGFCHVG…IYKLYCKNHS (122 aa)). Lys-227 is covalently cross-linked (Glycyl lysine isopeptide (Lys-Gly) (interchain with G-Cter in SUMO2)). A PHD-type 2 zinc finger spans residues 278 to 330 (MKCTLCSQPGATIGCEIKACVKTYHYHCGVQDKAKYIENMSRGIYKLYCKNHS). The interval 330–364 (SGNDERDEEDEERESKSRGRVAIDQQLTQQQLNGN) is disordered. Residues 354–364 (QQLTQQQLNGN) are compositionally biased toward polar residues. Thr-357 is subject to Phosphothreonine.

As to quaternary structure, interacts with UBTF. Interacts with the NuRD complex component RBBP4 (via the nucleolar localization motif), the interaction mediates transcriptional repression activity. In terms of tissue distribution, at 12.5 dpc it is highly expressed in the embryonic central nervous system and at lower levels in other tissues. Very low levels present throughout the adult brain.

Its subcellular location is the nucleus. It is found in the nucleolus. The protein localises to the chromosome. The protein resides in the centromere. It localises to the kinetochore. Its function is as follows. Transcriptional regulator that associates with ribosomal RNA promoters and suppresses ribosomal RNA (rRNA) transcription. The sequence is that of PHD finger protein 6 (Phf6) from Mus musculus (Mouse).